Reading from the N-terminus, the 519-residue chain is 2,3-bisphosphoglycerate-independent phosphoglycerate mutase (519 aa).

Mn(2+) is bound by residues Asp-18 and Ser-68. Catalysis depends on Ser-68, which acts as the Phosphoserine intermediate. Residues His-129, 159–160 (RD), Arg-191, Arg-197, 267–270 (RADR), and Lys-341 contribute to the substrate site. Asp-408, His-412, Asp-449, His-450, and His-468 together coordinate Mn(2+).

Belongs to the BPG-independent phosphoglycerate mutase family. Monomer. The cofactor is Mn(2+).

It catalyses the reaction (2R)-2-phosphoglycerate = (2R)-3-phosphoglycerate. The protein operates within carbohydrate degradation; glycolysis; pyruvate from D-glyceraldehyde 3-phosphate: step 3/5. Catalyzes the interconversion of 2-phosphoglycerate and 3-phosphoglycerate. This chain is 2,3-bisphosphoglycerate-independent phosphoglycerate mutase, found in Coxiella burnetii (strain RSA 331 / Henzerling II).